A 351-amino-acid polypeptide reads, in one-letter code: Fe(3+) ions import ATP-binding protein FbpC (351 aa).

One can recognise an ABC transporter domain in the interval 7–237 (VVLKNICKRF…PKSMFMANFM (231 aa)). 39 to 46 (GPSGCGKT) is a binding site for ATP.

Belongs to the ABC transporter superfamily. Fe(3+) ion importer (TC 3.A.1.10) family. In terms of assembly, the complex is composed of two ATP-binding proteins (FbpC), two transmembrane proteins (FbpB) and a solute-binding protein (FbpA).

Its subcellular location is the cell inner membrane. The enzyme catalyses Fe(3+)(out) + ATP + H2O = Fe(3+)(in) + ADP + phosphate + H(+). Part of the ABC transporter complex FbpABC involved in Fe(3+) ions import. Responsible for energy coupling to the transport system. This chain is Fe(3+) ions import ATP-binding protein FbpC, found in Vibrio cholerae serotype O1 (strain ATCC 39315 / El Tor Inaba N16961).